Consider the following 314-residue polypeptide: GATA zinc finger domain-containing protein 19 (314 aa).

The protein is GATA zinc finger domain-containing protein 19 (gtaS) of Dictyostelium discoideum (Social amoeba).